The following is a 633-amino-acid chain: Carbon monoxide dehydrogenase 2 (633 aa).

Cys44, Cys53, Cys56, Cys61, and Cys73 together coordinate [4Fe-4S] cluster. Positions 264, 343, 453, 484, and 525 each coordinate [Ni-4Fe-5S] cluster.

This sequence belongs to the Ni-containing carbon monoxide dehydrogenase family. As to quaternary structure, homodimer. It depends on [4Fe-4S] cluster as a cofactor. [Ni-4Fe-5S] cluster is required as a cofactor.

The enzyme catalyses CO + 2 oxidized [2Fe-2S]-[ferredoxin] + H2O = 2 reduced [2Fe-2S]-[ferredoxin] + CO2 + 2 H(+). CODH oxidizes carbon monoxide coupled, via CooF, to the reduction of a hydrogen cation by a hydrogenase (possibly CooH). This is Carbon monoxide dehydrogenase 2 (cooS2) from Methanosarcina acetivorans (strain ATCC 35395 / DSM 2834 / JCM 12185 / C2A).